Reading from the N-terminus, the 262-residue chain is Putative non-heme bromoperoxidase BpoC (262 aa).

Substrate contacts are provided by residues R21, 87-88 (SM), and R120. S87 is an active-site residue. Catalysis depends on residues D211 and H239. Residue H239 participates in substrate binding.

The protein belongs to the AB hydrolase superfamily. In terms of assembly, homodimer.

In Mycobacterium tuberculosis (strain CDC 1551 / Oshkosh), this protein is Putative non-heme bromoperoxidase BpoC (bpoC).